Consider the following 947-residue polypeptide: Receptor-like protein 56 (947 aa).

The first 27 residues, 1-27 (MEGKVFSGQKLILVMLLLGHLHGFSSC), serve as a signal peptide directing secretion. At 28–899 (IEKERKALLE…EDDKEVAIDM (872 aa)) the chain is on the extracellular side. N-linked (GlcNAc...) asparagine glycosylation is found at asparagine 60, asparagine 75, and asparagine 98. LRR repeat units follow at residues 105–128 (FEEV…VEGY), 134–157 (LRNL…FLNA), 159–182 (TSLT…ELKN), 183–207 (LTNL…EFPY), 209–232 (KKLK…GLKN), 233–257 (LTNL…VFCE), 259–281 (KNLQ…CFGN), 282–305 (LNKL…SFSS), and 307–330 (ESLE…PLTN). N-linked (GlcNAc...) asparagine glycans are attached at residues asparagine 141, asparagine 148, and asparagine 182. An N-linked (GlcNAc...) asparagine glycan is attached at asparagine 232. Asparagine 330 carries N-linked (GlcNAc...) asparagine glycosylation. The stretch at 332–356 (TKLKVFIFSSKDDMVQVKIESTWQP) is one LRR 10; degenerate repeat. LRR repeat units follow at residues 357 to 380 (LFQL…LMYQ), 381 to 404 (KNLH…LLEN), 405 to 427 (NPEL…PTSV), 428 to 450 (HNLQ…NFGR), 452 to 476 (LPNL…MGEM), 477 to 500 (YNIS…FVSS), 502 to 527 (FSLS…NFTS), 529 to 549 (IVLR…LLTL), 550 to 575 (VDLC…VFEY), 577 to 598 (NFLD…SLDN), 600 to 616 (LFLH…DTFL), 617 to 640 (GSIQ…VDTQ), 642 to 663 (ISFL…LCEF), 664 to 686 (SKMR…CFNN), 757 to 780 (LNSM…ELGD), 781 to 804 (LFKL…SFSK), 805 to 829 (LQDI…LTNL), and 831 to 854 (SLAI…QFNT). N-linked (GlcNAc...) asparagine glycosylation is present at asparagine 415. N-linked (GlcNAc...) asparagine glycans are attached at residues asparagine 459, asparagine 478, asparagine 488, and asparagine 524. A glycan (N-linked (GlcNAc...) asparagine) is linked at asparagine 606. Asparagine 686 carries N-linked (GlcNAc...) asparagine glycosylation. N-linked (GlcNAc...) asparagine glycosylation is found at asparagine 788, asparagine 828, asparagine 836, and asparagine 841. The chain crosses the membrane as a helical span at residues 900–920 (LVFYWSTAGTYVTALIGILVL). The Cytoplasmic segment spans residues 921–947 (MCVDCSWRRAWLRLVDAFIASAKSKLA).

This sequence belongs to the RLP family.

It is found in the cell membrane. The sequence is that of Receptor-like protein 56 from Arabidopsis thaliana (Mouse-ear cress).